The sequence spans 229 residues: Urease accessory protein UreF (229 aa).

The protein belongs to the UreF family. In terms of assembly, ureD, UreF and UreG form a complex that acts as a GTP-hydrolysis-dependent molecular chaperone, activating the urease apoprotein by helping to assemble the nickel containing metallocenter of UreC. The UreE protein probably delivers the nickel.

The protein resides in the cytoplasm. Functionally, required for maturation of urease via the functional incorporation of the urease nickel metallocenter. The protein is Urease accessory protein UreF of Corynebacterium efficiens (strain DSM 44549 / YS-314 / AJ 12310 / JCM 11189 / NBRC 100395).